A 319-amino-acid chain; its full sequence is Urease accessory protein UreD (319 aa).

Residues 254 to 273 form a disordered region; that stretch reads PDPVGSPAARRESVPAKRAE. The span at 262 to 273 shows a compositional bias: basic and acidic residues; sequence ARRESVPAKRAE.

Belongs to the UreD family. UreD, UreF and UreG form a complex that acts as a GTP-hydrolysis-dependent molecular chaperone, activating the urease apoprotein by helping to assemble the nickel containing metallocenter of UreC. The UreE protein probably delivers the nickel.

It is found in the cytoplasm. Required for maturation of urease via the functional incorporation of the urease nickel metallocenter. This is Urease accessory protein UreD from Frankia casuarinae (strain DSM 45818 / CECT 9043 / HFP020203 / CcI3).